A 198-amino-acid chain; its full sequence is Superoxide dismutase [Mn], mitochondrial (198 aa).

Position 26 (His26) interacts with Mn(2+). 3'-nitrotyrosine is present on Tyr34. Residues Lys44 and Lys51 each carry the N6-acetyllysine; alternate modification. N6-succinyllysine; alternate occurs at positions 44 and 51. His74 serves as a coordination point for Mn(2+). Lys90 carries the N6-acetyllysine modification. An N6-acetyllysine; alternate mark is found at Lys98 and Lys106. N6-succinyllysine; alternate is present on residues Lys98 and Lys106. The Mn(2+) site is built by Asp159 and His163. Lys178 carries the post-translational modification N6-acetyllysine.

The protein belongs to the iron/manganese superoxide dismutase family. In terms of assembly, homotetramer. The cofactor is Mn(2+). In terms of processing, nitrated under oxidative stress. Nitration coupled with oxidation inhibits the catalytic activity. Post-translationally, acetylation at Lys-98 decreases enzymatic activity. Deacetylated by SIRT3 upon exposure to ionizing radiations or after long fasting. Polyubiquitinated; leading to proteasomal degradation. Deubiquitinated by USP36 which increases protein stability.

It is found in the mitochondrion matrix. It carries out the reaction 2 superoxide + 2 H(+) = H2O2 + O2. Functionally, destroys superoxide anion radicals which are normally produced within the cells and which are toxic to biological systems. This chain is Superoxide dismutase [Mn], mitochondrial (SOD2), found in Hylobates lar (Lar gibbon).